Consider the following 456-residue polypeptide: Equilibrative nucleoside transporter 2 (456 aa).

The Cytoplasmic segment spans residues 1-12 (MAHGNAPRDSYH). The helical transmembrane segment at 13-29 (LVGISFFILGLGTLLPW) threads the bilayer. The Extracellular segment spans residues 30-68 (NFFITAIPYFQGRLAGTNSSAETPSTNHTSPTDTFNFNN). Asn-47 and Asn-56 each carry an N-linked (GlcNAc...) asparagine glycan. A helical membrane pass occupies residues 69-93 (WVTLLSQLPLLLFTLLNSFLYQCIP). The Cytoplasmic segment spans residues 94 to 97 (ESVR). The chain crosses the membrane as a helical span at residues 98–116 (ILGSLLAILLLFALTAALV). The Extracellular segment spans residues 117 to 124 (KVDLSPGL). The helical transmembrane segment at 125–143 (FFSITMASVWFINSFCAVL) threads the bilayer. Residues 144–160 (QGSLFGQLGTMPSTYST) lie on the Cytoplasmic side of the membrane. The chain crosses the membrane as a helical span at residues 161-185 (LFLSGQGLAGIFAALAMLTSLASGV). At 186–192 (DPQTSAL) the chain is on the extracellular side. A helical membrane pass occupies residues 193–213 (GYFITPCVGILLSIICYLSLP). At 214–291 (HLKFARYYLT…VFVVFRKIWL (78 aa)) the chain is on the cytoplasmic side. At Ser-251 the chain carries Phosphoserine. A helical membrane pass occupies residues 292 to 311 (TALCLVLVFTVTLSVFPAIT). Over 312 to 323 (AMVTTSSNSPGK) the chain is Extracellular. Residues 324–342 (WSQFFNPICCFLLFNVMDW) form a helical membrane-spanning segment. Over 343 to 359 (LGRSLTSYFLWPDEDSQ) the chain is Cytoplasmic. The helical transmembrane segment at 360–378 (LLPLLVCLRFLFVPLFMLC) threads the bilayer. The Extracellular segment spans residues 379 to 393 (HVPQRARLPIIFWQD). Residues 394–413 (AYFITFMLLFAISNGYFVSL) traverse the membrane as a helical segment. At 414 to 431 (TMCLAPRQVLPHEREVAG) the chain is on the cytoplasmic side. Residues 432–452 (ALMTFFLALGLSCGASLSFLF) traverse the membrane as a helical segment. Topologically, residues 453-456 (KALL) are extracellular.

Belongs to the SLC29A/ENT transporter (TC 2.A.57) family. In terms of tissue distribution, expressed in squeletal muscles. Expressed in testis at the blood-brain-barrier.

The protein localises to the apical cell membrane. Its subcellular location is the basolateral cell membrane. It carries out the reaction uridine(out) = uridine(in). It catalyses the reaction inosine(in) = inosine(out). The enzyme catalyses adenosine(in) = adenosine(out). The catalysed reaction is thymidine(in) = thymidine(out). It carries out the reaction hypoxanthine(out) = hypoxanthine(in). It catalyses the reaction adenine(out) = adenine(in). The enzyme catalyses cytidine(in) = cytidine(out). The catalysed reaction is thymine(out) = thymine(in). It carries out the reaction uracil(in) = uracil(out). It catalyses the reaction guanine(out) = guanine(in). The enzyme catalyses guanosine(in) = guanosine(out). Its function is as follows. Bidirectional uniporter involved in the facilitative transport of nucleosides and nucleobases, and contributes to maintaining their cellular homeostasis. Functions as a Na(+)-independent, passive transporter. Involved in the transport of nucleosides such as inosine, adenosine, uridine, thymidine, cytidine and guanosine. Also able to transport purine nucleobases (hypoxanthine, adenine, guanine) and pyrimidine nucleobases (thymine, uracil). Involved in nucleoside transport at basolateral membrane of kidney cells, allowing liver absorption of nucleoside metabolites. Mediates apical nucleoside uptake into Sertoli cells, thereby regulating the transport of nucleosides in testis across the blood-testis-barrier. Mediates both the influx and efflux of hypoxanthine in skeletal muscle microvascular endothelial cells to control the amount of intracellular hypoxanthine available for xanthine oxidase-mediated ROS production. In Rattus norvegicus (Rat), this protein is Equilibrative nucleoside transporter 2.